Reading from the N-terminus, the 833-residue chain is Leucine--tRNA ligase (833 aa).

The 'HIGH' region motif lies at 41–52 (PYPSGAGLHVGH). Residues 610–614 (KMSKS) carry the 'KMSKS' region motif. ATP is bound at residue lysine 613.

The protein belongs to the class-I aminoacyl-tRNA synthetase family.

Its subcellular location is the cytoplasm. The catalysed reaction is tRNA(Leu) + L-leucine + ATP = L-leucyl-tRNA(Leu) + AMP + diphosphate. This Streptococcus pneumoniae (strain Taiwan19F-14) protein is Leucine--tRNA ligase.